The following is a 452-amino-acid chain: Phosphoglucosamine mutase (452 aa).

Catalysis depends on serine 97, which acts as the Phosphoserine intermediate. The Mg(2+) site is built by serine 97, aspartate 236, aspartate 238, and aspartate 240. Serine 97 is modified (phosphoserine).

It belongs to the phosphohexose mutase family. The cofactor is Mg(2+). Post-translationally, activated by phosphorylation.

The catalysed reaction is alpha-D-glucosamine 1-phosphate = D-glucosamine 6-phosphate. Catalyzes the conversion of glucosamine-6-phosphate to glucosamine-1-phosphate. This chain is Phosphoglucosamine mutase, found in Prochlorococcus marinus subsp. pastoris (strain CCMP1986 / NIES-2087 / MED4).